The sequence spans 323 residues: Aldo-keto reductase family 1 member C13 (323 aa).

Residues 20-24 (GFGTY), Asp50, and Tyr55 each bind NAD(+). The active-site Proton donor is the Tyr55. His117 contacts substrate. NAD(+) contacts are provided by residues 166 to 167 (SN), Gln190, 216 to 224 (YGALGTQRY), and 270 to 280 (QSFKENEMREN).

This sequence belongs to the aldo/keto reductase family.

Its function is as follows. Catalyzes the dehydrogenation of 17-beta-hydroxysteroids. May also exhibit significant activity with a variety of cyclic and alicyclic alcohols. Uses both NAD and NADP, but the activity is much greater with NAD than with NADP. In Mus musculus (Mouse), this protein is Aldo-keto reductase family 1 member C13 (Akr1c13).